We begin with the raw amino-acid sequence, 162 residues long: Calcium-binding protein 4b (162 aa).

4 consecutive EF-hand domains span residues 10–45, 46–81, 85–120, and 123–158; these read ELTN…CKYP, NPTL…DYII, TCLK…SGSN, and QAKV…YFEI. Residues Asp23, Asn25, Asp27, Gln29, Glu34, Asp59, Asp61, Asp63, Lys65, and Glu70 each coordinate Ca(2+). The Ca(2+) site is built by Asp136, Asp138, Asp140, Cys142, and Glu147.

This Dictyostelium discoideum (Social amoeba) protein is Calcium-binding protein 4b (cbpD2).